The chain runs to 82 residues: Small ribosomal subunit protein bS18 (82 aa).

The tract at residues 1–25 is disordered; that stretch reads MTEMNQTAIRRPFHRRRKTCPFSGT.

The protein belongs to the bacterial ribosomal protein bS18 family. Part of the 30S ribosomal subunit. Forms a tight heterodimer with protein bS6.

In terms of biological role, binds as a heterodimer with protein bS6 to the central domain of the 16S rRNA, where it helps stabilize the platform of the 30S subunit. In Bartonella henselae (strain ATCC 49882 / DSM 28221 / CCUG 30454 / Houston 1) (Rochalimaea henselae), this protein is Small ribosomal subunit protein bS18.